The chain runs to 410 residues: Cysteine desulfurase IscS (410 aa).

Pyridoxal 5'-phosphate contacts are provided by residues 80–81, Asn-160, Gln-188, and 208–210; these read AT and SGH. N6-(pyridoxal phosphate)lysine is present on Lys-211. Thr-248 lines the pyridoxal 5'-phosphate pocket. Cys-334 (cysteine persulfide intermediate) is an active-site residue. Cys-334 is a [2Fe-2S] cluster binding site.

It belongs to the class-V pyridoxal-phosphate-dependent aminotransferase family. NifS/IscS subfamily. As to quaternary structure, homodimer. Forms a heterotetramer with IscU, interacts with other sulfur acceptors. Pyridoxal 5'-phosphate is required as a cofactor.

The protein resides in the cytoplasm. It catalyses the reaction (sulfur carrier)-H + L-cysteine = (sulfur carrier)-SH + L-alanine. It participates in cofactor biosynthesis; iron-sulfur cluster biosynthesis. Functionally, master enzyme that delivers sulfur to a number of partners involved in Fe-S cluster assembly, tRNA modification or cofactor biosynthesis. Catalyzes the removal of elemental sulfur atoms from cysteine to produce alanine. Functions as a sulfur delivery protein for Fe-S cluster synthesis onto IscU, an Fe-S scaffold assembly protein, as well as other S acceptor proteins. The protein is Cysteine desulfurase IscS of Rickettsia rickettsii (strain Iowa).